Here is a 381-residue protein sequence, read N- to C-terminus: Creatine kinase M-type (381 aa).

Residues 11-98 enclose the Phosphagen kinase N-terminal domain; the sequence is KLNYKPQEEY…FDPIIQDRHG (88 aa). The Phosphagen kinase C-terminal domain occupies 125–367; that stretch reads YVLSSRVRTG…KLMVEMEKKL (243 aa). Residue 128 to 132 coordinates ATP; it reads SSRVR. A Phosphoserine modification is found at Ser164. Thr166 is subject to Phosphothreonine. The residue at position 178 (Ser178) is a Phosphoserine. Thr180 is subject to Phosphothreonine. His191 contacts ATP. Position 199 is a phosphoserine (Ser199). 2 residues coordinate ATP: Arg236 and Arg292. A phosphothreonine mark is found at Thr313 and Thr322. Residues 320–325 and Asp335 contribute to the ATP site; that span reads RGTGGV. Position 372 is a phosphoserine (Ser372).

Belongs to the ATP:guanido phosphotransferase family. Dimer of identical or non-identical chains, which can be either B (brain type) or M (muscle type). With MM being the major form in skeletal muscle and myocardium, MB existing in myocardium, and BB existing in many tissues, especially brain.

It localises to the cytoplasm. It carries out the reaction creatine + ATP = N-phosphocreatine + ADP + H(+). Functionally, reversibly catalyzes the transfer of phosphate between ATP and various phosphogens (e.g. creatine phosphate). Creatine kinase isoenzymes play a central role in energy transduction in tissues with large, fluctuating energy demands, such as skeletal muscle, heart, brain and spermatozoa. The protein is Creatine kinase M-type (Ckm) of Mus musculus (Mouse).